Here is a 428-residue protein sequence, read N- to C-terminus: Adenylosuccinate synthetase (428 aa).

GTP is bound by residues 12–18 and 40–42; these read GDEGKGK and GHT. Asp-13 functions as the Proton acceptor in the catalytic mechanism. Residues Asp-13 and Gly-40 each contribute to the Mg(2+) site. Residues 13–16, 38–41, Thr-129, Arg-143, Gln-224, Thr-239, and Arg-303 each bind IMP; these read DEGK and NAGH. His-41 serves as the catalytic Proton donor. 299–305 contacts substrate; the sequence is VTTGRIR. GTP is bound by residues Arg-305, 331–333, and 410–412; these read KVD and AYG.

Belongs to the adenylosuccinate synthetase family. In terms of assembly, homodimer. Mg(2+) is required as a cofactor.

It is found in the cytoplasm. The catalysed reaction is IMP + L-aspartate + GTP = N(6)-(1,2-dicarboxyethyl)-AMP + GDP + phosphate + 2 H(+). Its pathway is purine metabolism; AMP biosynthesis via de novo pathway; AMP from IMP: step 1/2. Plays an important role in the de novo pathway of purine nucleotide biosynthesis. Catalyzes the first committed step in the biosynthesis of AMP from IMP. The polypeptide is Adenylosuccinate synthetase (Francisella tularensis subsp. mediasiatica (strain FSC147)).